A 459-amino-acid chain; its full sequence is Type I restriction enzyme HindI specificity subunit (459 aa).

The protein belongs to the type-I restriction system S methylase family. In terms of assembly, the type I restriction/modification system is composed of three polypeptides R, M and S; the restriction enzyme has stoichiometry R(2)M(2)S(1) while the methyltransferase is M(2)S(1).

The specificity (S) subunit of a type I restriction enzyme; this subunit dictates DNA sequence specificity. The M and S subunits together form a methyltransferase (MTase) that methylates adenosines in the sequence 5'-RAACN(5)TAG-3'. Methylation protects against cleavage by HindI. In the presence of the R subunit the complex can also act as an endonuclease, binding to the same target sequence but cutting the DNA some distance from this site. Whether the DNA is cut or modified depends on the methylation state of the target sequence. When the target site is unmodified, the DNA is cut. When the target site is hemimethylated, the complex acts as a maintenance MTase modifying the DNA so that both strands become methylated. After locating a non-methylated recognition site, the enzyme complex serves as a molecular motor that translocates DNA in an ATP-dependent manner until a collision occurs that triggers cleavage. This chain is Type I restriction enzyme HindI specificity subunit, found in Haemophilus influenzae (strain ATCC 51907 / DSM 11121 / KW20 / Rd).